A 719-amino-acid chain; its full sequence is Potassium-transporting ATPase ATP-binding subunit (719 aa).

4 consecutive transmembrane segments (helical) span residues 35–55 (LFVV…PGLF), 62–82 (VYYA…NYAE), 228–248 (ILLS…FFFG), and 254–274 (FVGG…VALM). Asp-318 serves as the catalytic 4-aspartylphosphate intermediate. Asp-355 and Glu-359 together coordinate ATP. The segment at 372–396 (GKVQTDGGQSASEELDEPGDSVDAP) is disordered. Residues 373-383 (KVQTDGGQSAS) show a composition bias toward polar residues. ATP is bound by residues 416 to 423 (FSAETRMS) and Lys-435. Mg(2+)-binding residues include Asp-554 and Asp-558. The next 3 helical transmembrane spans lie at 624-644 (FVLL…MDIL), 652-672 (AVTA…PLAL), and 698-718 (LIAP…LGVF).

The protein belongs to the cation transport ATPase (P-type) (TC 3.A.3) family. Type IA subfamily. The system is composed of three essential subunits: KdpA, KdpB and KdpC. The complex also contains KdpF, a small non-essential subunit.

It localises to the cell membrane. It carries out the reaction K(+)(out) + ATP + H2O = K(+)(in) + ADP + phosphate + H(+). Functionally, part of the high-affinity ATP-driven potassium transport (or Kdp) system, which catalyzes the hydrolysis of ATP coupled with the electrogenic transport of potassium into the cytoplasm. This subunit is responsible for energy coupling to the transport system and for the release of the potassium ions to the cytoplasm. The Kdp system is essential for growth under K(+) limitation, and for survival under desiccation and salt crystal inclusion. The sequence is that of Potassium-transporting ATPase ATP-binding subunit from Halobacterium salinarum (strain ATCC 29341 / DSM 671 / R1).